Here is a 300-residue protein sequence, read N- to C-terminus: Zinc finger CCCH-type antiviral protein 1-like (300 aa).

At Ala2 the chain carries N-acetylalanine. Residues 252 to 263 (NTDNSSPSTEHS) show a composition bias toward polar residues. Positions 252–300 (NTDNSSPSTEHSQGLEKQGVHAAGAAEAGPLASVPAQSAKKPCPVSCEK) are disordered. Over residues 271-283 (VHAAGAAEAGPLA) the composition is skewed to low complexity.

The polypeptide is Zinc finger CCCH-type antiviral protein 1-like (ZC3HAV1L) (Homo sapiens (Human)).